A 153-amino-acid polypeptide reads, in one-letter code: UPF0178 protein CC_1215 (153 aa).

Belongs to the UPF0178 family.

The polypeptide is UPF0178 protein CC_1215 (Caulobacter vibrioides (strain ATCC 19089 / CIP 103742 / CB 15) (Caulobacter crescentus)).